The following is a 181-amino-acid chain: Shikimate kinase 2 (181 aa).

ATP is bound at residue 12-17 (GCGKTT). T16 and D32 together coordinate Mg(2+). Substrate contacts are provided by D34, R58, and G79. The tract at residues 112 to 126 (EAEPEADLRPTLTGK) is LID domain. Residue R120 participates in ATP binding. Residue R139 coordinates substrate.

The protein belongs to the shikimate kinase family. AroL subfamily. As to quaternary structure, monomer. The cofactor is Mg(2+).

Its subcellular location is the cytoplasm. The enzyme catalyses shikimate + ATP = 3-phosphoshikimate + ADP + H(+). Its pathway is metabolic intermediate biosynthesis; chorismate biosynthesis; chorismate from D-erythrose 4-phosphate and phosphoenolpyruvate: step 5/7. Functionally, catalyzes the specific phosphorylation of the 3-hydroxyl group of shikimic acid using ATP as a cosubstrate. The chain is Shikimate kinase 2 from Salmonella dublin (strain CT_02021853).